The primary structure comprises 470 residues: TNF receptor-associated factor 4 (470 aa).

Residues 18–58 (CPLCGKPMREPVQVSTCGHRFCDTCLQEFLSEGVFKCPEDQ) form an RING-type zinc finger. TRAF-type zinc fingers lie at residues 101–154 (GHLN…EAYE), 155–208 (SHEG…DTIQ), and 209–267 (SHQY…LAMG). Residue Lys263 forms a Glycyl lysine isopeptide (Lys-Gly) (interchain with G-Cter in ubiquitin) linkage. A coiled-coil region spans residues 277–310 (HLAMMCALVSRQRQELQELRRELEELSIGSDGVL). Residues 307–462 (DGVLIWKIGS…DDAVFIRASV (156 aa)) enclose the MATH domain. Ser426 is modified (phosphoserine).

It belongs to the TNF receptor-associated factor family. B subfamily. As to quaternary structure, homotrimer. Interacts with LTBR/TNFRSF3, NGFR/TNFRSF16, RPS6KB1 and TGFB1I1. Interacts with SMURF1. Interacts (via TRAF domain) with MAP3K4 (via kinase domain). Interacts with NCF1, TICAM1, IRAK1 and TRAF6, and is probably part of a complex containing TRAF4, NCF1, TICAM1, IRAK1 and TRAF6. Interacts (via MATH domain) with GP6 and GP1BB. Interacts with EGFR (via C-terminal region); this interaction promotes the formation of EGFR asymmetric dimers. Interacts with PKM; this interaction promotes PKM kinase activity. Post-translationally, polyubiquitinated, leading to its proteasomal degradation. Ubiquitinated at Lys-263 by the SCF(FBXL2) complex, leading to its degradation by the proteasome. As to expression, predominantly expressed in brain. Preferentially expressed by postmitotic undifferentiated neurons in developing central (CNS) and peripheral (PNS) nervous system, and in nervous tissues of sensory organs. In the embryo, protein expression was shown in brain, thymus, salivary glands and intestine. In the adult, protein expression is restricted to the brain (hippocampus and olfactory bulb).

Its subcellular location is the cytoplasm. The protein resides in the nucleus. The protein localises to the perinuclear region. It localises to the cell junction. It is found in the tight junction. Its subcellular location is the cell membrane. The protein resides in the cytoskeleton. It catalyses the reaction S-ubiquitinyl-[E2 ubiquitin-conjugating enzyme]-L-cysteine + [acceptor protein]-L-lysine = [E2 ubiquitin-conjugating enzyme]-L-cysteine + N(6)-ubiquitinyl-[acceptor protein]-L-lysine.. Its pathway is protein degradation; proteasomal ubiquitin-dependent pathway. In terms of biological role, adapter protein with E3 ligase activity that is involved in many diverse biological processes including cell proliferation, migration, differentiation, DNA repair, platelet activation or apoptosis. Promotes EGFR-mediated signaling by facilitating the dimerization of EGFR and downstream AKT activation thereby promoting cell proliferation. Ubiquitinates SMURF2 through 'Lys-48'-linked ubiquitin chain leading to SMURF2 degradation through the proteasome and subsequently osteogenic differentiation. Promotes 'Lys-63'-mediated ubiquitination of CHK1 which in turn activates cell cycle arrest and activation of DNA repair. In addition, promotes an atypical 'Lys-29'-linked ubiquitination at the C-terminal end of IRS1 which is crucial for insulin-like growth factor (IGF) signal transduction. Regulates activation of NF-kappa-B in response to signaling through Toll-like receptors. Required for normal skeleton development, and for normal development of the respiratory tract. Required for activation of RPS6KB1 in response to TNF signaling. Modulates TRAF6 functions. Inhibits adipogenic differentiation by activating pyruvate kinase PKM activity and subsequently the beta-catenin signaling pathway. The chain is TNF receptor-associated factor 4 (Traf4) from Mus musculus (Mouse).